A 153-amino-acid polypeptide reads, in one-letter code: Large ribosomal subunit protein uL22 (153 aa).

This sequence belongs to the universal ribosomal protein uL22 family. As to quaternary structure, part of the 50S ribosomal subunit.

In terms of biological role, this protein binds specifically to 23S rRNA. It makes multiple contacts with different domains of the 23S rRNA in the assembled 50S subunit and ribosome. The globular domain of the protein is located near the polypeptide exit tunnel on the outside of the subunit, while an extended beta-hairpin is found that lines the wall of the exit tunnel in the center of the 70S ribosome. This chain is Large ribosomal subunit protein uL22, found in Methanocella arvoryzae (strain DSM 22066 / NBRC 105507 / MRE50).